The sequence spans 916 residues: Protein translocase subunit SecA (916 aa).

ATP is bound by residues glutamine 87, 105–109 (GEGKT), and aspartate 507. Zn(2+) contacts are provided by cysteine 900, cysteine 902, cysteine 911, and histidine 912.

The protein belongs to the SecA family. As to quaternary structure, monomer and homodimer. Part of the essential Sec protein translocation apparatus which comprises SecA, SecYEG and auxiliary proteins SecDF-YajC and YidC. It depends on Zn(2+) as a cofactor.

Its subcellular location is the cell inner membrane. The protein resides in the cytoplasm. The enzyme catalyses ATP + H2O + cellular proteinSide 1 = ADP + phosphate + cellular proteinSide 2.. Functionally, part of the Sec protein translocase complex. Interacts with the SecYEG preprotein conducting channel. Has a central role in coupling the hydrolysis of ATP to the transfer of proteins into and across the cell membrane, serving both as a receptor for the preprotein-SecB complex and as an ATP-driven molecular motor driving the stepwise translocation of polypeptide chains across the membrane. The polypeptide is Protein translocase subunit SecA (Neisseria gonorrhoeae (strain NCCP11945)).